A 461-amino-acid chain; its full sequence is Photosystem II CP43 reaction center protein (461 aa).

A propeptide spanning residues 1 to 2 (ME) is cleaved from the precursor. T3 carries the N-acetylthreonine modification. A Phosphothreonine modification is found at T3. 5 consecutive transmembrane segments (helical) span residues 57–81 (LFEV…PHLA), 122–143 (LLGP…KDRN), 166–188 (KALY…RKIS), 243–263 (KPFA…LSYS), and 279–300 (WFNN…ASQA). E355 contacts [CaMn4O5] cluster. Residues 435–459 (RARAAAAGFEKGIDRDFEPVLSMTP) form a helical membrane-spanning segment.

This sequence belongs to the PsbB/PsbC family. PsbC subfamily. PSII is composed of 1 copy each of membrane proteins PsbA, PsbB, PsbC, PsbD, PsbE, PsbF, PsbH, PsbI, PsbJ, PsbK, PsbL, PsbM, PsbT, PsbX, PsbY, PsbZ, Psb30/Ycf12, at least 3 peripheral proteins of the oxygen-evolving complex and a large number of cofactors. It forms dimeric complexes. It depends on Binds multiple chlorophylls and provides some of the ligands for the Ca-4Mn-5O cluster of the oxygen-evolving complex. It may also provide a ligand for a Cl- that is required for oxygen evolution. PSII binds additional chlorophylls, carotenoids and specific lipids. as a cofactor.

It is found in the plastid. The protein localises to the chloroplast thylakoid membrane. One of the components of the core complex of photosystem II (PSII). It binds chlorophyll and helps catalyze the primary light-induced photochemical processes of PSII. PSII is a light-driven water:plastoquinone oxidoreductase, using light energy to abstract electrons from H(2)O, generating O(2) and a proton gradient subsequently used for ATP formation. The chain is Photosystem II CP43 reaction center protein from Trachelium caeruleum (Blue throatwort).